A 628-amino-acid chain; its full sequence is Biosynthetic arginine decarboxylase (628 aa).

K99 carries the post-translational modification N6-(pyridoxal phosphate)lysine. Residue 279–289 participates in substrate binding; the sequence is VDVGGGLGIDY.

Belongs to the Orn/Lys/Arg decarboxylase class-II family. SpeA subfamily. The cofactor is Mg(2+). Pyridoxal 5'-phosphate is required as a cofactor.

The catalysed reaction is L-arginine + H(+) = agmatine + CO2. Its function is as follows. Catalyzes the biosynthesis of agmatine from arginine. The chain is Biosynthetic arginine decarboxylase from Xanthomonas axonopodis pv. citri (strain 306).